A 442-amino-acid polypeptide reads, in one-letter code: Coiled-coil domain-containing protein 91 (442 aa).

A GGA1-binding motif region spans residues 1 to 16 (MDDDDFGGFEAAETFD). Positions 1–27 (MDDDDFGGFEAAETFDGEQGGNQAVSP) are disordered. Ser-43 and Ser-46 each carry phosphoserine. Disordered regions lie at residues 48–80 (ELILDHDHSSPSTGHLPPDAVISSADDTHADSS) and 114–134 (HGALALEDEPEGPGVHVSNSQ). 3 coiled-coil regions span residues 130–210 (VSNS…GHEA), 253–318 (HAQH…MKDV), and 346–408 (ARDQ…RRLD). Residues 211–414 (LSIIVDEYKA…RRLDQVTRQR (204 aa)) form a homodimerization region.

As to quaternary structure, homodimer. Interacts with GGA1, GGA2 and AP1G1.

It localises to the membrane. The protein localises to the golgi apparatus. Its subcellular location is the trans-Golgi network membrane. The protein resides in the trans-Golgi network. Its function is as follows. Involved in the regulation of membrane traffic through the trans-Golgi network (TGN). Functions in close cooperation with the GGAs in the sorting of hydrolases to lysosomes. The polypeptide is Coiled-coil domain-containing protein 91 (Ccdc91) (Mus musculus (Mouse)).